A 191-amino-acid polypeptide reads, in one-letter code: Protein GrpE (191 aa).

Composition is skewed to basic and acidic residues over residues 1-19 (MKDEHNQEHDHLSPKEPES) and 29-45 (QQGEEKQEASEKEGEIK). Residues 1-45 (MKDEHNQEHDHLSPKEPESYQKAYACKEQQGEEKQEASEKEGEIK) are disordered.

It belongs to the GrpE family. Homodimer.

Its subcellular location is the cytoplasm. Participates actively in the response to hyperosmotic and heat shock by preventing the aggregation of stress-denatured proteins, in association with DnaK and GrpE. It is the nucleotide exchange factor for DnaK and may function as a thermosensor. Unfolded proteins bind initially to DnaJ; upon interaction with the DnaJ-bound protein, DnaK hydrolyzes its bound ATP, resulting in the formation of a stable complex. GrpE releases ADP from DnaK; ATP binding to DnaK triggers the release of the substrate protein, thus completing the reaction cycle. Several rounds of ATP-dependent interactions between DnaJ, DnaK and GrpE are required for fully efficient folding. This chain is Protein GrpE, found in Helicobacter pylori (strain J99 / ATCC 700824) (Campylobacter pylori J99).